We begin with the raw amino-acid sequence, 71 residues long: Translation initiation factor IF-1 (71 aa).

In terms of domain architecture, S1-like spans 1 to 71 (MSKDDLIQFT…LTKGRVIHRH (71 aa)).

This sequence belongs to the IF-1 family. As to quaternary structure, component of the 30S ribosomal translation pre-initiation complex which assembles on the 30S ribosome in the order IF-2 and IF-3, IF-1 and N-formylmethionyl-tRNA(fMet); mRNA recruitment can occur at any time during PIC assembly.

The protein resides in the cytoplasm. In terms of biological role, one of the essential components for the initiation of protein synthesis. Stabilizes the binding of IF-2 and IF-3 on the 30S subunit to which N-formylmethionyl-tRNA(fMet) subsequently binds. Helps modulate mRNA selection, yielding the 30S pre-initiation complex (PIC). Upon addition of the 50S ribosomal subunit IF-1, IF-2 and IF-3 are released leaving the mature 70S translation initiation complex. The protein is Translation initiation factor IF-1 of Rickettsia akari (strain Hartford).